A 494-amino-acid polypeptide reads, in one-letter code: Aspartyl/glutamyl-tRNA(Asn/Gln) amidotransferase subunit B (494 aa).

Belongs to the GatB/GatE family. GatB subfamily. As to quaternary structure, heterotrimer of A, B and C subunits.

The catalysed reaction is L-glutamyl-tRNA(Gln) + L-glutamine + ATP + H2O = L-glutaminyl-tRNA(Gln) + L-glutamate + ADP + phosphate + H(+). It catalyses the reaction L-aspartyl-tRNA(Asn) + L-glutamine + ATP + H2O = L-asparaginyl-tRNA(Asn) + L-glutamate + ADP + phosphate + 2 H(+). Its function is as follows. Allows the formation of correctly charged Asn-tRNA(Asn) or Gln-tRNA(Gln) through the transamidation of misacylated Asp-tRNA(Asn) or Glu-tRNA(Gln) in organisms which lack either or both of asparaginyl-tRNA or glutaminyl-tRNA synthetases. The reaction takes place in the presence of glutamine and ATP through an activated phospho-Asp-tRNA(Asn) or phospho-Glu-tRNA(Gln). The sequence is that of Aspartyl/glutamyl-tRNA(Asn/Gln) amidotransferase subunit B from Rhodopseudomonas palustris (strain ATCC BAA-98 / CGA009).